We begin with the raw amino-acid sequence, 79 residues long: Sec-independent protein translocase protein TatA (79 aa).

A helical membrane pass occupies residues 1 to 21 (MFSGISIWQLLILLAIVVLLF). 2 stretches are compositionally biased toward basic and acidic residues: residues 44 to 58 (MKDG…RLAD) and 66 to 79 (QDAE…KDKA). Residues 44–79 (MKDGEDEQDHKRLADDDQPQNKQDAEQKAEQEKDKA) are disordered.

Belongs to the TatA/E family. In terms of assembly, the Tat system comprises two distinct complexes: a TatABC complex, containing multiple copies of TatA, TatB and TatC subunits, and a separate TatA complex, containing only TatA subunits. Substrates initially bind to the TatABC complex, which probably triggers association of the separate TatA complex to form the active translocon.

It localises to the cell inner membrane. Its function is as follows. Part of the twin-arginine translocation (Tat) system that transports large folded proteins containing a characteristic twin-arginine motif in their signal peptide across membranes. TatA could form the protein-conducting channel of the Tat system. In Alcanivorax borkumensis (strain ATCC 700651 / DSM 11573 / NCIMB 13689 / SK2), this protein is Sec-independent protein translocase protein TatA.